The sequence spans 207 residues: Small ribosomal subunit protein uS2 (207 aa).

This sequence belongs to the universal ribosomal protein uS2 family.

The protein is Small ribosomal subunit protein uS2 of Pyrobaculum islandicum (strain DSM 4184 / JCM 9189 / GEO3).